The following is a 176-amino-acid chain: Pituitary adenylate cyclase-activating polypeptide (176 aa).

An N-terminal signal peptide occupies residues 1–24; that stretch reads MTMCSGARLALLVYGIIMHSSVYS. A propeptide spanning residues 25–79 is cleaved from the precursor; the sequence is SPAAAGLRFPGIRPEEEAYGEDGNPLPDFDGSEPPGAGSPASAPRAAAAWYRPAG. The interval 39–68 is disordered; sequence EEEAYGEDGNPLPDFDGSEPPGAGSPASAP. Residues 56-68 are compositionally biased toward low complexity; that stretch reads SEPPGAGSPASAP. Residues 150–158 are important for receptor binding; sequence VKKYLAAVL. Leu158 bears the Leucine amide mark. Lys169 carries the lysine amide modification. The propeptide occupies 173–176; sequence IAYL.

It belongs to the glucagon family.

Its subcellular location is the secreted. Functionally, PACAP is a neuropeptide involved in diverse array of physiological processes through activating the PACAP subfamily of class B1 G protein-coupled receptors: VIP receptor 1 (VIPR1), VIP receptor 2 (VIPR2), and PACAP type I receptor (ADCYAP1R1). Exerts neuroprotective and general cytoprotective effects due to anti-apoptotic, anti-inflammatory, and antioxidant actions. Promotes neuron projection development through the RAPGEF2/Rap1/B-Raf/ERK pathway. In chromaffin cells, induces long-lasting increase of intracellular calcium concentrations and neuroendocrine secretion. Involved in the control of glucose homeostasis, induces insulin secretion by pancreatic beta cells. PACAP exists in two bioactive forms from proteolysis of the same precursor protein, PACAP27 and PACAP38, which differ by eleven amino acid residues in the C-terminus. The sequence is that of Pituitary adenylate cyclase-activating polypeptide from Homo sapiens (Human).